Reading from the N-terminus, the 100-residue chain is Urease subunit gamma (100 aa).

The protein belongs to the urease gamma subunit family. In terms of assembly, heterotrimer of UreA (gamma), UreB (beta) and UreC (alpha) subunits. Three heterotrimers associate to form the active enzyme.

It localises to the cytoplasm. The catalysed reaction is urea + 2 H2O + H(+) = hydrogencarbonate + 2 NH4(+). It functions in the pathway nitrogen metabolism; urea degradation; CO(2) and NH(3) from urea (urease route): step 1/1. This Rhizobium meliloti (strain 1021) (Ensifer meliloti) protein is Urease subunit gamma.